We begin with the raw amino-acid sequence, 100 residues long: Urease subunit gamma (100 aa).

Belongs to the urease gamma subunit family. As to quaternary structure, heterotrimer of UreA (gamma), UreB (beta) and UreC (alpha) subunits. Three heterotrimers associate to form the active enzyme.

It is found in the cytoplasm. The catalysed reaction is urea + 2 H2O + H(+) = hydrogencarbonate + 2 NH4(+). Its pathway is nitrogen metabolism; urea degradation; CO(2) and NH(3) from urea (urease route): step 1/1. The protein is Urease subunit gamma of Ralstonia nicotianae (strain ATCC BAA-1114 / GMI1000) (Ralstonia solanacearum).